A 78-amino-acid polypeptide reads, in one-letter code: Exodeoxyribonuclease 7 small subunit (78 aa).

It belongs to the XseB family. In terms of assembly, heterooligomer composed of large and small subunits.

It is found in the cytoplasm. The enzyme catalyses Exonucleolytic cleavage in either 5'- to 3'- or 3'- to 5'-direction to yield nucleoside 5'-phosphates.. Bidirectionally degrades single-stranded DNA into large acid-insoluble oligonucleotides, which are then degraded further into small acid-soluble oligonucleotides. This is Exodeoxyribonuclease 7 small subunit from Paracoccus zeaxanthinifaciens.